A 216-amino-acid chain; its full sequence is MDKKLENQKDLLNQDPKVELNSQSVAKNPLNSREVKPIQRRRPLRKNARDKNSKPEFEERVIAIHRVVKVVKGGRRFSFSAFAVVGNKKGRVGFGHGKANEVQDAVKKAIKDAQNRLVSVPIYRKSTVPHEIAVKYLASKILIKPAPRGKGIVASNTVRAVVELAGYTDIYTKTYGSRTKINVVRATLKALLKLRTINQVAELRDLSPQQAQAQKV.

Residues 1 to 55 (MDKKLENQKDLLNQDPKVELNSQSVAKNPLNSREVKPIQRRRPLRKNARDKNSKP) form a disordered region. The span at 20–31 (LNSQSVAKNPLN) shows a compositional bias: polar residues. The S5 DRBM domain maps to 57–120 (FEERVIAIHR…KDAQNRLVSV (64 aa)).

The protein belongs to the universal ribosomal protein uS5 family. Part of the 30S ribosomal subunit. Contacts proteins S4 and S8.

Its function is as follows. With S4 and S12 plays an important role in translational accuracy. In terms of biological role, located at the back of the 30S subunit body where it stabilizes the conformation of the head with respect to the body. This chain is Small ribosomal subunit protein uS5, found in Mesomycoplasma hyopneumoniae (strain 7448) (Mycoplasma hyopneumoniae).